Reading from the N-terminus, the 344-residue chain is Isopentenyl-diphosphate delta-isomerase (344 aa).

Residue 9 to 10 (RK) coordinates substrate. Residues 65 to 67 (AMT), Ser-95, and Asn-124 contribute to the FMN site. Gln-154 is a binding site for substrate. A Mg(2+)-binding site is contributed by Glu-155. FMN-binding positions include Lys-185, Thr-215, 259 to 261 (GVR), and 280 to 281 (SG).

It belongs to the IPP isomerase type 2 family. Homooctamer. Dimer of tetramers. It depends on FMN as a cofactor. NADPH serves as cofactor. Requires Mg(2+) as cofactor.

The protein resides in the cytoplasm. The catalysed reaction is isopentenyl diphosphate = dimethylallyl diphosphate. In terms of biological role, involved in the biosynthesis of isoprenoids. Catalyzes the 1,3-allylic rearrangement of the homoallylic substrate isopentenyl (IPP) to its allylic isomer, dimethylallyl diphosphate (DMAPP). This is Isopentenyl-diphosphate delta-isomerase from Lacticaseibacillus paracasei (strain ATCC 334 / BCRC 17002 / CCUG 31169 / CIP 107868 / KCTC 3260 / NRRL B-441) (Lactobacillus paracasei).